The sequence spans 358 residues: MGAIISRWKTKLTTVEQLENIDKEIKQLEEFRAKNQRLQKLWVGRLLLYSSALYLLISLFVYLLYLPEQWLLRLAMALPFFIYPVLVWFIRRFLIFLFSKRSERNNDKLEDLKATKKKILEEVMETETYKNAKAILERFDPDAKKKPELEATPVRPQMTPGAGQELRQRGVALRHMPMGTPVAVTPGARPPLGPGGTPVERVPLSAPGGPPERSGLAASVQMTPRSLGSPVPGVGMHPPGPPLARPVLPKDRGAVDRVIEYLVGDGPQNRYALICQQCFSHNGMALKEEFEYLAFRCAYCYFLNPARKMRPQAPRLPEFNFEKRLRAESSTPGPAPHSATDTEESAPPSRGMDKHGRA.

The Cytoplasmic segment spans residues 1-45; that stretch reads MGAIISRWKTKLTTVEQLENIDKEIKQLEEFRAKNQRLQKLWVGR. Residues 9–41 adopt a coiled-coil conformation; sequence KTKLTTVEQLENIDKEIKQLEEFRAKNQRLQKL. The helical transmembrane segment at 46–66 threads the bilayer; the sequence is LLLYSSALYLLISLFVYLLYL. The Lumenal segment spans residues 67 to 69; that stretch reads PEQ. The chain crosses the membrane as a helical span at residues 70–90; sequence WLLRLAMALPFFIYPVLVWFI. At 91-358 the chain is on the cytoplasmic side; that stretch reads RRFLIFLFSK…SRGMDKHGRA (268 aa). The stretch at 99 to 128 forms a coiled coil; it reads SKRSERNNDKLEDLKATKKKILEEVMETET. The C4-type; plays a role in ER morphology zinc-finger motif lies at 275-300; the sequence is CQQCFSHNGMALKEEFEYLAFRCAYC. A disordered region spans residues 320–358; it reads NFEKRLRAESSTPGPAPHSATDTEESAPPSRGMDKHGRA.

This sequence belongs to the lunapark family. In terms of assembly, homodimer; homodimerization requires the C4-type zinc finger motif and decreases during mitosis in a phosphorylation-dependent manner. Post-translationally, phosphorylated. Phosphorylation occurs during interphase. Phosphorylation also occurs during mitosis; these phosphorylations reduce both its homodimerization and the ER three-way tubular junction formation.

It localises to the endoplasmic reticulum membrane. Its function is as follows. Endoplasmic reticulum (ER)-shaping membrane protein that plays a role in determining ER morphology. Involved in the stabilization of nascent three-way ER tubular junctions within the ER network. May also play a role as a curvature-stabilizing protein within three-way ER tubular junction network. This is Endoplasmic reticulum junction formation protein lunapark-B (lnpkb) from Takifugu rubripes (Japanese pufferfish).